Consider the following 303-residue polypeptide: Kynurenine formamidase (303 aa).

An HGGXW motif is present at residues 95–99; it reads HGGYW. The active-site Nucleophile is the Ser-164. Catalysis depends on residues Asp-247 and His-279.

Belongs to the kynurenine formamidase family. In terms of assembly, homodimer.

It is found in the cytoplasm. The protein localises to the cytosol. It localises to the nucleus. The enzyme catalyses N-formyl-L-kynurenine + H2O = L-kynurenine + formate + H(+). The protein operates within amino-acid degradation; L-tryptophan degradation via kynurenine pathway; L-kynurenine from L-tryptophan: step 2/2. Functionally, catalyzes the hydrolysis of N-formyl-L-kynurenine to L-kynurenine, the second step in the kynurenine pathway of tryptophan degradation. Kynurenine may be further oxidized to nicotinic acid, NAD(H) and NADP(H). Required for elimination of toxic metabolites. The chain is Kynurenine formamidase from Homo sapiens (Human).